The following is a 186-amino-acid chain: UPF0301 protein Swoo_1337 (186 aa).

The protein belongs to the UPF0301 (AlgH) family.

The sequence is that of UPF0301 protein Swoo_1337 from Shewanella woodyi (strain ATCC 51908 / MS32).